We begin with the raw amino-acid sequence, 283 residues long: Large ribosomal subunit protein mL46 (283 aa).

Lys217 carries the N6-succinyllysine modification. Position 228 is an N6-acetyllysine (Lys228). At Lys246 the chain carries N6-succinyllysine.

The protein belongs to the mitochondrion-specific ribosomal protein mL46 family. Component of the mitochondrial ribosome large subunit (39S) which comprises a 16S rRNA and about 50 distinct proteins.

The protein resides in the mitochondrion. In Mus musculus (Mouse), this protein is Large ribosomal subunit protein mL46 (Mrpl46).